Here is a 273-residue protein sequence, read N- to C-terminus: Large ribosomal subunit protein uL2 (273 aa).

Disordered regions lie at residues 34 to 54 (LEKK…TRHI) and 223 to 273 (VAMN…RRRK).

Belongs to the universal ribosomal protein uL2 family. Part of the 50S ribosomal subunit. Forms a bridge to the 30S subunit in the 70S ribosome.

Functionally, one of the primary rRNA binding proteins. Required for association of the 30S and 50S subunits to form the 70S ribosome, for tRNA binding and peptide bond formation. It has been suggested to have peptidyltransferase activity; this is somewhat controversial. Makes several contacts with the 16S rRNA in the 70S ribosome. In Pseudomonas aeruginosa (strain LESB58), this protein is Large ribosomal subunit protein uL2.